Consider the following 129-residue polypeptide: Large ribosomal subunit protein bL17 (129 aa).

The protein belongs to the bacterial ribosomal protein bL17 family. As to quaternary structure, part of the 50S ribosomal subunit. Contacts protein L32.

The protein is Large ribosomal subunit protein bL17 of Actinobacillus succinogenes (strain ATCC 55618 / DSM 22257 / CCUG 43843 / 130Z).